The following is a 358-amino-acid chain: Methionine aminopeptidase 2 (358 aa).

Histidine 109 contributes to the substrate binding site. A divalent metal cation-binding residues include aspartate 130, aspartate 141, and histidine 210. Residue histidine 218 coordinates substrate. A divalent metal cation-binding residues include glutamate 243 and glutamate 339.

It belongs to the peptidase M24A family. Methionine aminopeptidase eukaryotic type 2 subfamily. It depends on Co(2+) as a cofactor. The cofactor is Zn(2+). Mn(2+) serves as cofactor. Fe(2+) is required as a cofactor.

The protein resides in the cytoplasm. The catalysed reaction is Release of N-terminal amino acids, preferentially methionine, from peptides and arylamides.. Its function is as follows. Cotranslationally removes the N-terminal methionine from nascent proteins. The N-terminal methionine is often cleaved when the second residue in the primary sequence is small and uncharged (Met-Ala-, Cys, Gly, Pro, Ser, Thr, or Val). This chain is Methionine aminopeptidase 2, found in Encephalitozoon cuniculi (strain GB-M1) (Microsporidian parasite).